The sequence spans 1205 residues: U2 snRNP component prp10 (1205 aa).

3 disordered regions span residues 39–58 (QKEA…EGTQ), 122–175 (YADE…GRSY), and 202–254 (GTLK…RRSR). Over residues 44–58 (KNSSTNGSVNIEGTQ) the composition is skewed to polar residues. Residues 130 to 153 (MQERQSKKQIQDRESDYQKQRYDR) show a composition bias toward basic and acidic residues. HEAT repeat units lie at residues 393-429 (LRER…DFGA), 431-473 (ALFN…PFTH), 475-505 (ILVV…AKAS), 506-540 (GLAH…ASAL), 541-578 (GVPA…LLGC), 582-619 (PHLK…AATP), 665-702 (HFTR…TDGV), 745-782 (VGSR…SLGV), 828-865 (PYLP…VLKA), 912-949 (PPIR…RGSE), 954-991 (REWM…AIGP), 993-1024 (DVLA…AETC), 1025-1061 (MPFT…YIGE), 1065-1102 (DYVY…GCVG), 1107-1142 (DAMI…RNCI), and 1143-1179 (GVGP…QSAD).

This sequence belongs to the SF3B1 family. Belongs to the 40S cdc5-associated complex (or cwf complex), a spliceosome sub-complex reminiscent of a late-stage spliceosome composed of the U2, U5 and U6 snRNAs and at least brr2, cdc5, cwf2/prp3, cwf3/syf1, cwf4/syf3, cwf5/ecm2, spp42/cwf6, cwf7/spf27, cwf8, cwf9, cwf10, cwf11, cwf12, prp45/cwf13, cwf14, cwf15, cwf16, cwf17, cwf18, cwf19, cwf20, cwf21, cwf22, cwf23, cwf24, cwf25, cwf26, cyp7/cwf27, cwf28, cwf29/ist3, lea1, msl1, prp5/cwf1, prp10, prp12/sap130, prp17, prp22, sap61, sap62, sap114, sap145, slu7, smb1, smd1, smd3, smf1, smg1 and syf2.

It localises to the nucleus. In terms of biological role, contacts pre-mRNA on both sides of the branch site early in spliceosome assembly. This chain is U2 snRNP component prp10 (prp10), found in Schizosaccharomyces pombe (strain 972 / ATCC 24843) (Fission yeast).